We begin with the raw amino-acid sequence, 163 residues long: Phosphopantetheine adenylyltransferase (163 aa).

Ser-10 contacts substrate. Residues 10–11 (SF) and His-18 contribute to the ATP site. Residues Lys-42, Leu-74, and Arg-88 each contribute to the substrate site. Residues 89 to 91 (GLR), Glu-99, and 124 to 130 (YSFLSSS) each bind ATP.

It belongs to the bacterial CoaD family. As to quaternary structure, homohexamer. Mg(2+) is required as a cofactor.

Its subcellular location is the cytoplasm. It catalyses the reaction (R)-4'-phosphopantetheine + ATP + H(+) = 3'-dephospho-CoA + diphosphate. Its pathway is cofactor biosynthesis; coenzyme A biosynthesis; CoA from (R)-pantothenate: step 4/5. Its function is as follows. Reversibly transfers an adenylyl group from ATP to 4'-phosphopantetheine, yielding dephospho-CoA (dPCoA) and pyrophosphate. The chain is Phosphopantetheine adenylyltransferase from Bacillus mycoides (strain KBAB4) (Bacillus weihenstephanensis).